A 257-amino-acid polypeptide reads, in one-letter code: Zinc transporter ZupT (257 aa).

The next 8 membrane-spanning stretches (helical) occupy residues 5 to 25 (LILT…GVLG), 32 to 52 (LLAF…LMEM), 61 to 81 (GMSP…YFGL), 109 to 129 (AILL…ATFV), 137 to 157 (LGFG…LAVA), 171 to 191 (ILWA…AWLI), 195 to 215 (MISP…MVAL), and 236 to 256 (GVLC…TAGI). Fe(2+) contacts are provided by asparagine 120 and glutamate 123. 2 residues coordinate Zn(2+): glutamate 123 and histidine 148. 3 residues coordinate Fe(2+): asparagine 149, glutamate 152, and glutamate 181. Glutamate 152 serves as a coordination point for Zn(2+).

It belongs to the ZIP transporter (TC 2.A.5) family. ZupT subfamily.

The protein localises to the cell inner membrane. It catalyses the reaction Zn(2+)(in) = Zn(2+)(out). Mediates zinc uptake. May also transport other divalent cations. The sequence is that of Zinc transporter ZupT from Shigella flexneri serotype 5b (strain 8401).